Consider the following 554-residue polypeptide: Glucose-6-phosphate isomerase (554 aa).

Ser2 carries the post-translational modification N-acetylserine. Position 53 is a phosphothreonine (Thr53). D-glucose 6-phosphate contacts are provided by residues 168-169, 218-223, Gln363, Glu367, His398, and Lys520; these read GS and SKTFTT. Thr220 carries the post-translational modification Phosphothreonine. The active-site Proton donor is the Glu367. Residues His398 and Lys520 contribute to the active site.

Belongs to the GPI family. In terms of assembly, homodimer.

It is found in the cytoplasm. Its subcellular location is the cytosol. It carries out the reaction alpha-D-glucose 6-phosphate = beta-D-fructose 6-phosphate. The protein operates within carbohydrate degradation; glycolysis; D-glyceraldehyde 3-phosphate and glycerone phosphate from D-glucose: step 2/4. With respect to regulation, strongly inhibited by the polyol (sugar alcohol) phosphate D-glucitol 6-phosphate (D-sorbitol 6-phosphate). Also inhibited by the polyol (sugar alcohol) phosphate D-ribitol 5-phosphate. Its function is as follows. In the cytoplasm, catalyzes the conversion of glucose-6-phosphate to fructose-6-phosphate, the second step in glycolysis, and the reverse reaction during gluconeogenesis. This Saccharomyces cerevisiae (strain ATCC 204508 / S288c) (Baker's yeast) protein is Glucose-6-phosphate isomerase (PGI1).